The primary structure comprises 172 residues: T-cell receptor gamma chain C region C7.5 (172 aa).

The c region stretch occupies residues 1 to 140; it reads DKKLDADISP…QFTITSAYYT (140 aa). Residues 141–160 traverse the membrane as a helical segment; it reads YLLLLLKSVIYLAIISFSLL. Over 161 to 172 the chain is Cytoplasmic; sequence RRTSVCCNEKKS.

It localises to the membrane. This is T-cell receptor gamma chain C region C7.5 from Mus musculus (Mouse).